Reading from the N-terminus, the 952-residue chain is UvrABC system protein A (952 aa).

ATP is bound at residue 31–38 (GVSGSGKS). The C4-type zinc finger occupies 253–280 (CPEHGSVLEELEPRIFSFNSPYGACPAC). ABC transporter domains are found at residues 309-591 (WSRG…PQSL) and 611-938 (GNGK…AFLA). Residue 643–650 (GPSGSGKS) participates in ATP binding. The C4-type zinc-finger motif lies at 742–768 (CEACGGDGTVKIEMLFLPDLYVPCEVC).

The protein belongs to the ABC transporter superfamily. UvrA family. Forms a heterotetramer with UvrB during the search for lesions.

It localises to the cytoplasm. Its function is as follows. The UvrABC repair system catalyzes the recognition and processing of DNA lesions. UvrA is an ATPase and a DNA-binding protein. A damage recognition complex composed of 2 UvrA and 2 UvrB subunits scans DNA for abnormalities. When the presence of a lesion has been verified by UvrB, the UvrA molecules dissociate. The chain is UvrABC system protein A from Thermus thermophilus (strain ATCC 27634 / DSM 579 / HB8).